The chain runs to 273 residues: Glutamate 5-kinase (273 aa).

Lys15 lines the ATP pocket. Substrate is bound by residues Ser55, Asp142, and Asn158. Residues 178 to 179 (SD) and 220 to 226 (TGGMLSK) each bind ATP.

It belongs to the glutamate 5-kinase family.

Its subcellular location is the cytoplasm. The catalysed reaction is L-glutamate + ATP = L-glutamyl 5-phosphate + ADP. Its pathway is amino-acid biosynthesis; L-proline biosynthesis; L-glutamate 5-semialdehyde from L-glutamate: step 1/2. In terms of biological role, catalyzes the transfer of a phosphate group to glutamate to form L-glutamate 5-phosphate. The sequence is that of Glutamate 5-kinase from Streptococcus pyogenes serotype M1.